Here is a 500-residue protein sequence, read N- to C-terminus: Probable cytosol aminopeptidase (500 aa).

Residues Lys264 and Asp269 each coordinate Mn(2+). Lys276 is a catalytic residue. Asp287, Asp346, and Glu348 together coordinate Mn(2+). Arg350 is a catalytic residue.

It belongs to the peptidase M17 family. The cofactor is Mn(2+).

It localises to the cytoplasm. The enzyme catalyses Release of an N-terminal amino acid, Xaa-|-Yaa-, in which Xaa is preferably Leu, but may be other amino acids including Pro although not Arg or Lys, and Yaa may be Pro. Amino acid amides and methyl esters are also readily hydrolyzed, but rates on arylamides are exceedingly low.. It catalyses the reaction Release of an N-terminal amino acid, preferentially leucine, but not glutamic or aspartic acids.. Its function is as follows. Presumably involved in the processing and regular turnover of intracellular proteins. Catalyzes the removal of unsubstituted N-terminal amino acids from various peptides. The sequence is that of Probable cytosol aminopeptidase from Chlamydia abortus (strain DSM 27085 / S26/3) (Chlamydophila abortus).